The primary structure comprises 304 residues: GTP cyclohydrolase FolE2 (304 aa).

The protein belongs to the GTP cyclohydrolase IV family.

It carries out the reaction GTP + H2O = 7,8-dihydroneopterin 3'-triphosphate + formate + H(+). It participates in cofactor biosynthesis; 7,8-dihydroneopterin triphosphate biosynthesis; 7,8-dihydroneopterin triphosphate from GTP: step 1/1. In terms of biological role, converts GTP to 7,8-dihydroneopterin triphosphate. The chain is GTP cyclohydrolase FolE2 from Chromohalobacter salexigens (strain ATCC BAA-138 / DSM 3043 / CIP 106854 / NCIMB 13768 / 1H11).